We begin with the raw amino-acid sequence, 483 residues long: S-adenosylhomocysteine hydrolase-like protein 1 (483 aa).

Positions 1–56 (MQEFTKFPTKTGRRSLSRSISQSSTDSYSSAASYTDSSDDEVSPREKQQTNSKGSS) are disordered. A compositionally biased stretch (low complexity) spans 17–36 (SRSISQSSTDSYSSAASYTD). Residues 18-45 (RSISQSSTDSYSSAASYTDSSDDEVSPR) are PEST. The residue at position 21 (S21) is a Phosphoserine; by PKD. S24, S27, S30, and S37 each carry phosphoserine. Residues 91-154 (QGEKPLAGAK…EAGVAVFAWK (64 aa)) form an interaction with BCL2L10 region. Residues T108, D182, E207, K237, and D241 each coordinate substrate. An NAD binding region spans residues 234-401 (SVTKQKFDNL…EGRLLNLSCS (168 aa)). Residues 271-275 (GYGEV), E294, and N329 contribute to the NAD(+) site. At S344 the chain carries Phosphoserine. 350-352 (MGH) lines the NAD(+) pocket. Residues 473 to 483 (NGPFKPNYYRY) are PDZ-binding.

Belongs to the adenosylhomocysteinase family. Forms multimers. Forms heteromultimers with AHCYL2 (via the C-terminal region). Interacts (when phosphorylated) with ITPR1 (when not phosphorylated); the interaction suppresses inositol 1,4,5-trisphosphate binding to ITPR1. Interacts with BCL2L10; this strengthens the interaction of AHCYL1 with ITPR1. Interacts with CFTR and SLC26A6; the interactions take place once AHCYL1 is released from ITPR1 and increase CFTR and SLC26A6 activities. Interacts with RRM1; in a phosphorylation- and (dATP)-dependent manner. Interacts (via PEST domain when phosphorylated) with SLC4A4 isoform 1 but not isoform 2; the interaction increases SLC4A4 isoform 1 activity. Interacts (when phosphorylated) with SLC9A3; the interaction is required for SLC9A3 apical location and activity. Interacts (when phosphorylated) with FIP1L1; the interaction is direct and associates AHCYL1 with the CPSF complex and RNA. Interacts with PAPOLA. Interacts with ZCCHC4. Interacts with AHCY. The cofactor is NAD(+). Phosphorylated at Ser/Thr residues between Ser-21 and Thr-25 in the PEST region: required for interaction with dATP-bound RRM1 and ITPR1. Phosphorylation at Ser-21 by PRKD1 and CAMK4 is required for further phosphorylations by CSNK1A1. Phosphorylation is induced by oxidative stress. Probably phosphorylated by CAMK2A; phosphorylation at Ser-21 may be required for interaction with SLC9A3. Dephosphorylated in response to apoptotic stress conditions which causes translocation of both AHCYL1 and BCL2L10 from mitochondria-associated endoplasmic reticulum membranes and promotes apoptosis. As to expression, expressed in kidney proximal tubules and outer medulla (at protein level).

It localises to the endoplasmic reticulum. Its subcellular location is the cytoplasm. The protein localises to the cytosol. It is found in the apical cell membrane. The protein resides in the microsome. Multifaceted cellular regulator which coordinates several essential cellular functions including regulation of epithelial HCO3(-) and fluid secretion, mRNA processing and DNA replication. Regulates ITPR1 sensitivity to inositol 1,4,5-trisphosphate, competing for the common binding site and acting as endogenous 'pseudoligand' whose inhibitory activity can be modulated by its phosphorylation status. Promotes the formation of contact points between the endoplasmic reticulum (ER) and mitochondria, facilitating transfer of Ca(2+) from the ER to mitochondria. Under normal cellular conditions, functions cooperatively with BCL2L10 to limit ITPR1-mediated Ca(2+) release but, under apoptotic stress conditions, dephosphorylated which promotes dissociation of both AHCYL1 and BCL2L10 from mitochondria-associated endoplasmic reticulum membranes, inhibits BCL2L10 interaction with ITPR1 and leads to increased Ca(2+) transfer to mitochondria which promotes apoptosis. In the pancreatic and salivary ducts, at resting state, attenuates inositol 1,4,5-trisphosphate-induced calcium release by interacting with ITPR1. When extracellular stimuli induce ITPR1 phosphorylation or inositol 1,4,5-trisphosphate production, dissociates from ITPR1 to interact with CFTR and SLC26A6, mediating their synergistic activation by calcium and cAMP that stimulates the epithelial secretion of electrolytes and fluid. Also activates basolateral SLC4A4 isoform 1 to coordinate fluid and HCO3(-) secretion. Inhibits the effect of STK39 on SLC4A4 and CFTR by recruiting PP1 phosphatase which activates SLC4A4, SLC26A6 and CFTR through dephosphorylation. Mediates the induction of SLC9A3 surface expression produced by Angiotensin-2. Depending on the cell type, activates SLC9A3 in response to calcium or reverses SLC9A3R2-dependent calcium inhibition. May modulate the polyadenylation state of specific mRNAs, both by controlling the subcellular location of FIP1L1 and by inhibiting PAPOLA activity, in response to a stimulus that alters its phosphorylation state. Acts as a (dATP)-dependent inhibitor of ribonucleotide reductase large subunit RRM1, controlling the endogenous dNTP pool and ensuring normal cell cycle progression. In vitro does not exhibit any S-adenosyl-L-homocysteine hydrolase activity. The sequence is that of S-adenosylhomocysteine hydrolase-like protein 1 from Rattus norvegicus (Rat).